The chain runs to 354 residues: Thymidylate synthase (354 aa).

The disordered stretch occupies residues 1-32 (MPAAGSEPSRPPSPPGVQEQSAEPRPPPPPHG). Residue Arg53 coordinates dUMP. Ser117 carries the post-translational modification Phosphoserine. 178 to 179 (RR) provides a ligand contact to dUMP. The active-site Nucleophile is the Cys198. Residues 218–221 (RSGD), Asn229, and 259–261 (HIY) each bind dUMP. A (6R)-5,10-methylene-5,6,7,8-tetrahydrofolate-binding site is contributed by Asp221. Lys349 participates in a covalent cross-link: Glycyl lysine isopeptide (Lys-Gly) (interchain with G-Cter in SUMO2). Ala353 lines the (6R)-5,10-methylene-5,6,7,8-tetrahydrofolate pocket.

It belongs to the thymidylate synthase family. In terms of assembly, homodimer.

Its subcellular location is the nucleus. The protein resides in the cytoplasm. It localises to the mitochondrion. The protein localises to the mitochondrion matrix. It is found in the mitochondrion inner membrane. The catalysed reaction is dUMP + (6R)-5,10-methylene-5,6,7,8-tetrahydrofolate = 7,8-dihydrofolate + dTMP. It participates in pyrimidine metabolism; dTTP biosynthesis. Catalyzes the reductive methylation of 2'-deoxyuridine 5'-monophosphate (dUMP) to thymidine 5'-monophosphate (dTMP), using the cosubstrate, 5,10- methylenetetrahydrofolate (CH2H4folate) as a 1-carbon donor and reductant and contributes to the de novo mitochondrial thymidylate biosynthesis pathway. The chain is Thymidylate synthase (TYMS) from Bos taurus (Bovine).